We begin with the raw amino-acid sequence, 431 residues long: Glutamyl-tRNA(Gln) amidotransferase subunit A (431 aa).

Active-site charge relay system residues include Lys55 and Ser130. Ser154 (acyl-ester intermediate) is an active-site residue.

Belongs to the amidase family. GatA subfamily. As to quaternary structure, heterotrimer of A, B and C subunits.

The catalysed reaction is L-glutamyl-tRNA(Gln) + L-glutamine + ATP + H2O = L-glutaminyl-tRNA(Gln) + L-glutamate + ADP + phosphate + H(+). Allows the formation of correctly charged Gln-tRNA(Gln) through the transamidation of misacylated Glu-tRNA(Gln) in organisms which lack glutaminyl-tRNA synthetase. The reaction takes place in the presence of glutamine and ATP through an activated gamma-phospho-Glu-tRNA(Gln). The chain is Glutamyl-tRNA(Gln) amidotransferase subunit A from Methanococcus maripaludis (strain C7 / ATCC BAA-1331).